Here is a 633-residue protein sequence, read N- to C-terminus: Acetylcholinesterase (633 aa).

Positions 1–23 (MKILDALLFPVIFIMFFIHLSIA) are cleaved as a signal peptide. Residues C91 and C118 are joined by a disulfide bond. N-linked (GlcNAc...) asparagine glycosylation is found at N133 and N184. The Acyl-ester intermediate role is filled by S225. The cysteines at positions 279 and 290 are disulfide-linked. An N-linked (GlcNAc...) asparagine glycan is attached at N283. The active-site Charge relay system is the E352. N368 carries an N-linked (GlcNAc...) asparagine glycan. A disulfide bridge connects residues C427 and C579. Residue H494 is the Charge relay system of the active site. Residues N511 and N591 are each glycosylated (N-linked (GlcNAc...) asparagine).

This sequence belongs to the type-B carboxylesterase/lipase family.

It localises to the synapse. The protein resides in the secreted. Its subcellular location is the cell membrane. The catalysed reaction is acetylcholine + H2O = choline + acetate + H(+). Its function is as follows. Terminates signal transduction at the neuromuscular junction by rapid hydrolysis of the acetylcholine released into the synaptic cleft. The protein is Acetylcholinesterase (ache) of Electrophorus electricus (Electric eel).